The primary structure comprises 382 residues: Lipid-A-disaccharide synthase (382 aa).

This sequence belongs to the LpxB family.

It catalyses the reaction 2-N,3-O-bis[(3R)-3-hydroxytetradecanoyl]-alpha-D-glucosaminyl 1-phosphate + UDP-2-N,3-O-bis[(3R)-3-hydroxytetradecanoyl]-alpha-D-glucosamine = lipid A disaccharide (E. coli) + UDP + H(+). The enzyme catalyses a lipid X + a UDP-2-N,3-O-bis[(3R)-3-hydroxyacyl]-alpha-D-glucosamine = a lipid A disaccharide + UDP + H(+). It functions in the pathway glycolipid biosynthesis; lipid IV(A) biosynthesis; lipid IV(A) from (3R)-3-hydroxytetradecanoyl-[acyl-carrier-protein] and UDP-N-acetyl-alpha-D-glucosamine: step 5/6. Condensation of UDP-2,3-diacylglucosamine and 2,3-diacylglucosamine-1-phosphate to form lipid A disaccharide, a precursor of lipid A, a phosphorylated glycolipid that anchors the lipopolysaccharide to the outer membrane of the cell. This is Lipid-A-disaccharide synthase from Salmonella heidelberg (strain SL476).